Here is a 347-residue protein sequence, read N- to C-terminus: GMP reductase (347 aa).

Residue 108-131 (TDFEKTKQILIANPALNFLCIDVA) participates in NADP(+) binding. K(+) contacts are provided by Gly-181 and Gly-183. The active-site Thioimidate intermediate is the Cys-186. NADP(+) is bound at residue 216-239 (IISDGGCTMPGDVAKAFGGGADFV).

The protein belongs to the IMPDH/GMPR family. GuaC type 1 subfamily. In terms of assembly, homotetramer.

It catalyses the reaction IMP + NH4(+) + NADP(+) = GMP + NADPH + 2 H(+). Catalyzes the irreversible NADPH-dependent deamination of GMP to IMP. It functions in the conversion of nucleobase, nucleoside and nucleotide derivatives of G to A nucleotides, and in maintaining the intracellular balance of A and G nucleotides. The polypeptide is GMP reductase (Enterobacter sp. (strain 638)).